A 130-amino-acid chain; its full sequence is Chaperone protein SycT (130 aa).

In terms of assembly, binds to YopT.

In terms of biological role, functions as a specific chaperone for YopT. The protein is Chaperone protein SycT (sycT) of Yersinia enterocolitica.